The primary structure comprises 125 residues: Large ribosomal subunit protein bL12 (125 aa).

Belongs to the bacterial ribosomal protein bL12 family. Homodimer. Part of the ribosomal stalk of the 50S ribosomal subunit. Forms a multimeric L10(L12)X complex, where L10 forms an elongated spine to which 2 to 4 L12 dimers bind in a sequential fashion. Binds GTP-bound translation factors.

Functionally, forms part of the ribosomal stalk which helps the ribosome interact with GTP-bound translation factors. Is thus essential for accurate translation. This Sphingopyxis alaskensis (strain DSM 13593 / LMG 18877 / RB2256) (Sphingomonas alaskensis) protein is Large ribosomal subunit protein bL12.